The primary structure comprises 716 residues: Myogenesis-regulating glycosidase (716 aa).

Positions M1–A11 are enriched in polar residues. A disordered region spans residues M1–L26. Residues M1–P55 lie on the Cytoplasmic side of the membrane. A helical; Signal-anchor for type II membrane protein membrane pass occupies residues L56 to Y76. The Extracellular portion of the chain corresponds to Y77–S716. N239, N249, and N455 each carry an N-linked (GlcNAc...) asparagine glycan. Active-site residues include D462 and E465. D527 functions as the Proton donor in the catalytic mechanism.

It belongs to the glycosyl hydrolase 31 family. In terms of assembly, interacts with IGF2; this interaction is required for IGF2 secretion. Expressed in brain, liver, spleen, skeletal muscle, heart, lung and kidney. High expression is observed in the cerebellum, specifically in astrocytes. Highly expressed in skeletal muscle (at protein level).

The protein localises to the nucleus membrane. The protein resides in the endoplasmic reticulum membrane. Putative glycosidase. Promotes myogenesis by activating AKT signaling through the maturation and secretion of IGF2. This is Myogenesis-regulating glycosidase (Myorg) from Mus musculus (Mouse).